Reading from the N-terminus, the 197-residue chain is Imidazoleglycerol-phosphate dehydratase (197 aa).

Belongs to the imidazoleglycerol-phosphate dehydratase family.

The protein localises to the cytoplasm. The enzyme catalyses D-erythro-1-(imidazol-4-yl)glycerol 3-phosphate = 3-(imidazol-4-yl)-2-oxopropyl phosphate + H2O. It participates in amino-acid biosynthesis; L-histidine biosynthesis; L-histidine from 5-phospho-alpha-D-ribose 1-diphosphate: step 6/9. In Xanthobacter autotrophicus (strain ATCC BAA-1158 / Py2), this protein is Imidazoleglycerol-phosphate dehydratase.